Consider the following 100-residue polypeptide: NADH-quinone oxidoreductase subunit K (100 aa).

The next 3 membrane-spanning stretches (helical) occupy residues 4–24 (LTHGLILAAILFVLGLTGLVI), 28–48 (LLFMLIGLEIMINASALAFVV), and 60–80 (VMYILAISLAAAEASIGLALL).

This sequence belongs to the complex I subunit 4L family. NDH-1 is composed of 13 different subunits. Subunits NuoA, H, J, K, L, M, N constitute the membrane sector of the complex.

The protein resides in the cell inner membrane. It catalyses the reaction a quinone + NADH + 5 H(+)(in) = a quinol + NAD(+) + 4 H(+)(out). In terms of biological role, NDH-1 shuttles electrons from NADH, via FMN and iron-sulfur (Fe-S) centers, to quinones in the respiratory chain. The immediate electron acceptor for the enzyme in this species is believed to be ubiquinone. Couples the redox reaction to proton translocation (for every two electrons transferred, four hydrogen ions are translocated across the cytoplasmic membrane), and thus conserves the redox energy in a proton gradient. The polypeptide is NADH-quinone oxidoreductase subunit K (Salmonella agona (strain SL483)).